The primary structure comprises 309 residues: Porphobilinogen deaminase (309 aa).

At cysteine 241 the chain carries S-(dipyrrolylmethanemethyl)cysteine.

The protein belongs to the HMBS family. As to quaternary structure, monomer. It depends on dipyrromethane as a cofactor.

The enzyme catalyses 4 porphobilinogen + H2O = hydroxymethylbilane + 4 NH4(+). Its pathway is porphyrin-containing compound metabolism; protoporphyrin-IX biosynthesis; coproporphyrinogen-III from 5-aminolevulinate: step 2/4. In terms of biological role, tetrapolymerization of the monopyrrole PBG into the hydroxymethylbilane pre-uroporphyrinogen in several discrete steps. This Desulforudis audaxviator (strain MP104C) protein is Porphobilinogen deaminase.